The chain runs to 387 residues: UDP-N-acetylglucosamine--N-acetylmuramyl-(pentapeptide) pyrophosphoryl-undecaprenol N-acetylglucosamine transferase (387 aa).

Residues 14-16, N124, R167, S195, and Q296 each bind UDP-N-acetyl-alpha-D-glucosamine; that span reads TGG. The interval 366–387 is disordered; the sequence is LPQQNSIEEDSTFEKNQEGAVA. The segment covering 377 to 387 has biased composition (basic and acidic residues); sequence TFEKNQEGAVA.

The protein belongs to the glycosyltransferase 28 family. MurG subfamily.

The protein resides in the cell inner membrane. It catalyses the reaction di-trans,octa-cis-undecaprenyl diphospho-N-acetyl-alpha-D-muramoyl-L-alanyl-D-glutamyl-meso-2,6-diaminopimeloyl-D-alanyl-D-alanine + UDP-N-acetyl-alpha-D-glucosamine = di-trans,octa-cis-undecaprenyl diphospho-[N-acetyl-alpha-D-glucosaminyl-(1-&gt;4)]-N-acetyl-alpha-D-muramoyl-L-alanyl-D-glutamyl-meso-2,6-diaminopimeloyl-D-alanyl-D-alanine + UDP + H(+). The protein operates within cell wall biogenesis; peptidoglycan biosynthesis. Cell wall formation. Catalyzes the transfer of a GlcNAc subunit on undecaprenyl-pyrophosphoryl-MurNAc-pentapeptide (lipid intermediate I) to form undecaprenyl-pyrophosphoryl-MurNAc-(pentapeptide)GlcNAc (lipid intermediate II). The polypeptide is UDP-N-acetylglucosamine--N-acetylmuramyl-(pentapeptide) pyrophosphoryl-undecaprenol N-acetylglucosamine transferase (Zymomonas mobilis subsp. mobilis (strain ATCC 31821 / ZM4 / CP4)).